The sequence spans 56 residues: MEKLFKEVKLEELENQKGSGLGKAQCAALWLQCASGGTIGCGGGAVACQNYRQFCR.

A propeptide spanning residues M1–S19 is cleaved from the precursor. 2 disulfide bridges follow: C26/C55 and C33/C48. Residue C41 is glycosylated (S-linked (Glc) cysteine; by host).

Monomer. Post-translationally, production of active sublancin-168 requires at least one thiol-disulfide oxidoreductase (BdbB or, in its absence, BdbC). Membrane translocation and cleavage of the precursor are probably performed by SunT.

The protein resides in the secreted. In terms of biological role, bacteriocin active against Gram-positive bacteria. Inhibits B.cereus spore outgrowth, after the germination stage, approximately 1000-fold better than it inhibits exponential growth of the same cells. Inhibits B.subtilis strain ATCC 6633. This is Bacteriocin sublancin-168 (sunA) from Bacillus pumilus (Bacillus mesentericus).